A 108-amino-acid polypeptide reads, in one-letter code: MMKGGMAGLMKQAQQMQEKMAKMQEELANAEVTGQSGAGLVSVVMTGRHDVKRINLDDSLMQEDKEVLEDLIAAAVNDAVRKIEQASQDKTASMTAGMQLPPGMKLPF.

The span at 85-96 shows a compositional bias: polar residues; that stretch reads QASQDKTASMTA. Residues 85-108 form a disordered region; it reads QASQDKTASMTAGMQLPPGMKLPF.

This sequence belongs to the YbaB/EbfC family. Homodimer.

It localises to the cytoplasm. The protein localises to the nucleoid. Functionally, binds to DNA and alters its conformation. May be involved in regulation of gene expression, nucleoid organization and DNA protection. The chain is Nucleoid-associated protein PSPTO_3645 from Pseudomonas syringae pv. tomato (strain ATCC BAA-871 / DC3000).